The following is a 276-amino-acid chain: Streptothricin hydrolase (276 aa).

Cys176 (nucleophile) is an active-site residue. A disordered region spans residues Pro250–Arg276. Residues Ala252–Pro267 show a composition bias toward low complexity.

It belongs to the isochorismatase family. Homodimer. Does not require a metal cofactor. is required as a cofactor.

The enzyme catalyses streptothricin F + H2O = streptothricin F acid. Functionally, catalyzes the hydrolysis of the amide bond of streptolidine lactam, thereby conferring streptothricin (ST) resistance. Can hydrolyze streptothricin-F and streptothricin-D. However, this strain is believed to be a ST nonproducer, which raises the possibility that its true role may not be its involvement in self-resistance to STs. May catalyze the hydrolysis of naturally occurring cyclic amide compounds that are structurally related to STs. In Streptomyces noursei (Streptomyces albulus), this protein is Streptothricin hydrolase (sttH).